The chain runs to 597 residues: Arginine--tRNA ligase (597 aa).

Residues 125 to 135 (PNTNKPLHLGH) carry the 'HIGH' region motif.

It belongs to the class-I aminoacyl-tRNA synthetase family. As to quaternary structure, monomer.

Its subcellular location is the cytoplasm. The catalysed reaction is tRNA(Arg) + L-arginine + ATP = L-arginyl-tRNA(Arg) + AMP + diphosphate. This chain is Arginine--tRNA ligase, found in Parabacteroides distasonis (strain ATCC 8503 / DSM 20701 / CIP 104284 / JCM 5825 / NCTC 11152).